A 234-amino-acid chain; its full sequence is UPF0173 metal-dependent hydrolase R01310 (234 aa).

It belongs to the UPF0173 family.

This is UPF0173 metal-dependent hydrolase R01310 from Rhizobium meliloti (strain 1021) (Ensifer meliloti).